The chain runs to 156 residues: Ribosomal RNA large subunit methyltransferase H (156 aa).

Residues L73, G104, and 123 to 128 (LSPLTL) each bind S-adenosyl-L-methionine.

It belongs to the RNA methyltransferase RlmH family. Homodimer.

The protein resides in the cytoplasm. It carries out the reaction pseudouridine(1915) in 23S rRNA + S-adenosyl-L-methionine = N(3)-methylpseudouridine(1915) in 23S rRNA + S-adenosyl-L-homocysteine + H(+). Functionally, specifically methylates the pseudouridine at position 1915 (m3Psi1915) in 23S rRNA. The protein is Ribosomal RNA large subunit methyltransferase H of Photobacterium profundum (strain SS9).